Consider the following 264-residue polypeptide: tRNA pseudouridine synthase A (264 aa).

Asp51 (nucleophile) is an active-site residue. Tyr109 lines the substrate pocket.

Belongs to the tRNA pseudouridine synthase TruA family. In terms of assembly, homodimer.

The catalysed reaction is uridine(38/39/40) in tRNA = pseudouridine(38/39/40) in tRNA. In terms of biological role, formation of pseudouridine at positions 38, 39 and 40 in the anticodon stem and loop of transfer RNAs. This Staphylococcus aureus (strain MRSA252) protein is tRNA pseudouridine synthase A.